Here is a 274-residue protein sequence, read N- to C-terminus: Large ribosomal subunit protein uL2 (274 aa).

Residues 223 to 256 are disordered; that stretch reads VVMNPVDHPHGGGEGKTGEGRHPVDPWGNLTKGY. A compositionally biased stretch (basic and acidic residues) spans 229–246; sequence DHPHGGGEGKTGEGRHPV.

This sequence belongs to the universal ribosomal protein uL2 family. As to quaternary structure, part of the 50S ribosomal subunit. Forms a bridge to the 30S subunit in the 70S ribosome.

Its function is as follows. One of the primary rRNA binding proteins. Required for association of the 30S and 50S subunits to form the 70S ribosome, for tRNA binding and peptide bond formation. It has been suggested to have peptidyltransferase activity; this is somewhat controversial. Makes several contacts with the 16S rRNA in the 70S ribosome. The chain is Large ribosomal subunit protein uL2 from Albidiferax ferrireducens (strain ATCC BAA-621 / DSM 15236 / T118) (Rhodoferax ferrireducens).